The sequence spans 175 residues: Pathogenesis-related protein 1A1 (175 aa).

An N-terminal signal peptide occupies residues 1 to 21; that stretch reads MKSSIFVACFITFIIFHSSQA. The region spanning 29–146 is the SCP domain; that stretch reads LNAHNAARRR…SGWVFITCNY (118 aa). 3 cysteine pairs are disulfide-bonded: cysteine 65-cysteine 135, cysteine 108-cysteine 114, and cysteine 130-cysteine 144.

This sequence belongs to the CRISP family.

Probably involved in the defense reaction of plants against pathogens. In Solanum lycopersicum (Tomato), this protein is Pathogenesis-related protein 1A1.